A 330-amino-acid chain; its full sequence is D-lactate dehydrogenase (330 aa).

NAD(+) is bound by residues 156–157 (RI), D176, 206–207 (VP), 233–235 (AAR), and D259. R235 is a catalytic residue. Residue E264 is part of the active site. The Proton donor role is filled by H296.

The protein belongs to the D-isomer specific 2-hydroxyacid dehydrogenase family.

It catalyses the reaction (R)-lactate + NAD(+) = pyruvate + NADH + H(+). In Staphylococcus aureus (strain MRSA252), this protein is D-lactate dehydrogenase (ldhD).